The chain runs to 130 residues: MNEREFKRLLKVRARLKRKKPRFLRQEWWRYPKFKNDPKWRRPKGIDSKMRLKLKGKPRSPSIGWSSPRLVRGLHPSGYEEVLIHNVKELERLDPRRQAARIAHTVGKKKRIEILKRAEELGIKVLNPRL.

This sequence belongs to the eukaryotic ribosomal protein eL32 family.

This is Large ribosomal subunit protein eL32 (rpl32e) from Pyrococcus horikoshii (strain ATCC 700860 / DSM 12428 / JCM 9974 / NBRC 100139 / OT-3).